Reading from the N-terminus, the 256-residue chain is Coiled-coil domain-containing protein 90B, mitochondrial (256 aa).

The transit peptide at 1 to 42 (MRNRWIWRFLRPECSGIRWISSPHGRLSPALRRGFLTTTTKS) directs the protein to the mitochondrion. Positions 106–164 (AQQEITIQQLMAHLDSIRKDMVILEKSEFANLRAENEKMKIELDQVKQQLINETSRIRA) form a coiled coil. A helical membrane pass occupies residues 231–253 (TIRYLAASVFTCLAIALGFYRFW).

This sequence belongs to the CCDC90 family. As to quaternary structure, interacts with MCU.

It localises to the mitochondrion membrane. This Rattus norvegicus (Rat) protein is Coiled-coil domain-containing protein 90B, mitochondrial (Ccdc90b).